The primary structure comprises 97 residues: MSRACELTGKSVQYGNNVSHANNRTRRRFLPNLCNVTLISETLGQSYRLRISANALRSVEHRGGLDAFLVKSDDKELSQRARLLKRQIAKKQAEAAA.

It belongs to the bacterial ribosomal protein bL28 family.

This Brucella abortus (strain S19) protein is Large ribosomal subunit protein bL28.